The chain runs to 716 residues: Hepatocyte growth factor-like protein (716 aa).

The first 18 residues, 1–18 (MGWLPLLLLLVQCSRALG), serve as a signal peptide directing secretion. The region spanning 19 to 105 (QRSPLNDFQL…SLCHLFQKKD (87 aa)) is the PAN domain. Intrachain disulfides connect Cys-56-Cys-78, Cys-60-Cys-66, Cys-110-Cys-186, Cys-131-Cys-169, Cys-157-Cys-181, Cys-191-Cys-268, Cys-194-Cys-333, Cys-212-Cys-251, Cys-240-Cys-263, Cys-292-Cys-370, Cys-313-Cys-352, Cys-341-Cys-364, Cys-379-Cys-457, Cys-400-Cys-440, Cys-428-Cys-452, Cys-477-Cys-593, Cys-512-Cys-528, Cys-607-Cys-672, Cys-637-Cys-651, and Cys-662-Cys-690. Asn-72 carries N-linked (GlcNAc...) asparagine glycosylation. 4 Kringle domains span residues 110-186 (CIMD…IKTC), 191-268 (CVLC…LPSC), 292-370 (CFRG…IPRC), and 379-457 (CYHG…LQRC). Asn-173 carries N-linked (GlcNAc...) asparagine glycosylation. Asn-305 carries an N-linked (GlcNAc...) asparagine glycan. Positions 489–714 (VVGGHPGNSP…FVDWINKVMQ (226 aa)) constitute a Peptidase S1 domain. Asn-620 is a glycosylation site (N-linked (GlcNAc...) asparagine).

This sequence belongs to the peptidase S1 family. Plasminogen subfamily. In terms of assembly, dimer of an alpha chain and a beta chain linked by a disulfide bond. Interacts (via beta chain) with MST1R (via SEMA domain). In terms of processing, cleaved after Arg-488, probably by HPN/Hepsin, to yield the active form consisting of two disulfide-linked chains. Liver. Lower levels in lung, placenta and adrenal.

The protein localises to the secreted. This is Hepatocyte growth factor-like protein (Mst1) from Mus musculus (Mouse).